A 253-amino-acid polypeptide reads, in one-letter code: Isopentenyl-diphosphate delta-isomerase IDI1 (253 aa).

Lys61 lines the substrate pocket. 2 residues coordinate Mg(2+): His65 and His76. A Nudix hydrolase domain is found at 74 to 224 (LLHRAFSVFL…SLVFTPWFKL (151 aa)). Substrate contacts are provided by Gln94 and Lys99. The active site involves Cys111. Substrate is bound at residue Ser112. The Nudix box signature appears at 112 to 145 (SHPLHIPTETGSTLEDSIAGVKRAAQRKLEHELG). Glu174 and Glu176 together coordinate Mg(2+). Glu176 is an active-site residue.

This sequence belongs to the IPP isomerase type 1 family. Mg(2+) is required as a cofactor.

It carries out the reaction isopentenyl diphosphate = dimethylallyl diphosphate. The protein operates within isoprenoid biosynthesis; dimethylallyl diphosphate biosynthesis; dimethylallyl diphosphate from isopentenyl diphosphate: step 1/1. Isopentenyl-diphosphate delta-isomerase; part of the second module of ergosterol biosynthesis pathway that includes the middle steps of the pathway. IDI1 catalyzes the 1,3-allylic rearrangement of isopentenyl (IPP) to its highly electrophilic allylic isomer, dimethylallyl diphosphate (DMAPP). The second module is carried out in the vacuole and involves the formation of farnesyl diphosphate, which is also an important intermediate in the biosynthesis of ubiquinone, dolichol, heme and prenylated proteins. Activity by the mevalonate kinase ERG12 (FG05912) first converts mevalonate into 5-phosphomevalonate. 5-phosphomevalonate is then further converted to 5-diphosphomevalonate by the phosphomevalonate kinase ERG8 (FG09764). The diphosphomevalonate decarboxylase ERG19 (FG10424) then produces isopentenyl diphosphate. The isopentenyl-diphosphate delta-isomerase IDI1 (FG09722) then catalyzes the 1,3-allylic rearrangement of the homoallylic substrate isopentenyl (IPP) to its highly electrophilic allylic isomer, dimethylallyl diphosphate (DMAPP). Finally the farnesyl diphosphate synthase ERG20 (FG06784) catalyzes the sequential condensation of isopentenyl pyrophosphate with dimethylallyl pyrophosphate, and then with the resultant geranylpyrophosphate to the ultimate product farnesyl pyrophosphate. In Gibberella zeae (strain ATCC MYA-4620 / CBS 123657 / FGSC 9075 / NRRL 31084 / PH-1) (Wheat head blight fungus), this protein is Isopentenyl-diphosphate delta-isomerase IDI1.